The following is a 1131-amino-acid chain: Phytochrome B1 (1131 aa).

Residues 1-11 (MASGSRTKHSY) show a composition bias toward basic residues. Residues 1–26 (MASGSRTKHSYHNSSQGQAQSSGTSN) are disordered. Positions 14-25 (SSQGQAQSSGTS) are enriched in low complexity. Positions 229–408 (DIKLLCDTVV…AFGLQLNMEL (180 aa)) constitute a GAF domain. Residue Cys334 coordinates phytochromobilin. PAS domains are found at residues 622–693 (VARE…LRGV) and 756–808 (DYKA…GEIF). Residues 904–1124 (YICQEVKSPL…MIILDLPMTR (221 aa)) enclose the Histidine kinase domain.

Belongs to the phytochrome family. In terms of assembly, homodimer. Post-translationally, contains one covalently linked phytochromobilin chromophore.

Functionally, regulatory photoreceptor which exists in two forms that are reversibly interconvertible by light: the Pr form that absorbs maximally in the red region of the spectrum and the Pfr form that absorbs maximally in the far-red region. Photoconversion of Pr to Pfr induces an array of morphogenic responses, whereas reconversion of Pfr to Pr cancels the induction of those responses. Pfr controls the expression of a number of nuclear genes including those encoding the small subunit of ribulose-bisphosphate carboxylase, chlorophyll A/B binding protein, protochlorophyllide reductase, rRNA, etc. It also controls the expression of its own gene(s) in a negative feedback fashion. The sequence is that of Phytochrome B1 from Solanum lycopersicum (Tomato).